We begin with the raw amino-acid sequence, 168 residues long: UPF0262 protein BRADO6636 (168 aa).

This sequence belongs to the UPF0262 family.

This chain is UPF0262 protein BRADO6636, found in Bradyrhizobium sp. (strain ORS 278).